Reading from the N-terminus, the 402-residue chain is Arginine deiminase (402 aa).

Cys-392 acts as the Amidino-cysteine intermediate in catalysis.

This sequence belongs to the arginine deiminase family.

The protein localises to the cytoplasm. It catalyses the reaction L-arginine + H2O = L-citrulline + NH4(+). It participates in amino-acid degradation; L-arginine degradation via ADI pathway; carbamoyl phosphate from L-arginine: step 1/2. This Mycobacterium bovis (strain ATCC BAA-935 / AF2122/97) protein is Arginine deiminase (arcA).